Consider the following 338-residue polypeptide: MASGGGAAFEELPHDGTCDECEPDEAPGAEEVCRECGFCYCRHHAEAHGQKFPRHHLAEYVHCAAQAWTPGARGDGAGEEAVEAPVENEKALENEAGEGIESEEDSEPEEESETEEESEDESEEDSEEEMEDEQESEAEEDNQEEGESEAEGETEAESEFDPEIEMEAERVAKRKCPDHGLDLSTYCQEDKQLICVLCPVIGAHHGHHLSTLDEAFEELRSKDSGGLKAAMIELVERLKFKSSDPKVTRDQMKMFIQQEFKKVQKVIADEEQKALHLVDIQEAMATAHVTEILADIQSHMDRLMTQMAQAKEQLDTSNESAEPKAEGDEEEPGGTDED.

Disordered regions lie at residues 1-25 (MASG…EPDE) and 72-162 (ARGD…EFDP). A compositionally biased stretch (acidic residues) spans 95–162 (EAGEGIESEE…ETEAESEFDP (68 aa)). A coiled-coil region spans residues 109-153 (EEESETEEESEDESEEDSEEEMEDEQESEAEEDNQEEGESEAEGE). The B box-type zinc finger occupies 171-212 (VAKRKCPDHGLDLSTYCQEDKQLICVLCPVIGAHHGHHLSTL). The Zn(2+) site is built by Cys176, His179, Cys198, and His204. Residues 257-322 (QQEFKKVQKV…QLDTSNESAE (66 aa)) are a coiled coil. The disordered stretch occupies residues 307–338 (MAQAKEQLDTSNESAEPKAEGDEEEPGGTDED). Residues 327–338 (GDEEEPGGTDED) show a composition bias toward acidic residues.

In terms of assembly, interacts (via coiled coil) with TRIM17 (via coiled coil).

Its function is as follows. May play a role in the process of differentiation and maturation of neuronal cells. May regulate the activity of TRIM17. Is a negative regulator of PAX6 expression. This chain is Tripartite motif-containing protein 44 (TRIM44), found in Bos taurus (Bovine).